Here is a 317-residue protein sequence, read N- to C-terminus: MATSPKSTFVLGHRHLLGIEGLSAHDITGLLDLSEEYVELNRQVDKKRTVLRGRTQVNLFFEASTRTQSSFELAGKRLGADVMNMSVSSSSIKKGETLMDTAVTLNAMHPDILVVRHHASGAVELLARKVDGSVINAGDGAHEHPTQALLDALTIRRNKGRLEGLVIAICGDVLHSRVARSNILLLNTMGARVRVVAPSTLLPPGIERMGVEVARDMREGLNGADIVMMLRLQRERMNGSFVPSSSEYFQYFGLDQKKLAYAKPDALVMHPGPMNRGVEIDSIVADGAQSLIREQVEMGVAVRMAVLEALARNLPNA.

Residues arginine 66 and threonine 67 each coordinate carbamoyl phosphate. Lysine 94 lines the L-aspartate pocket. Positions 116, 144, and 147 each coordinate carbamoyl phosphate. 2 residues coordinate L-aspartate: arginine 177 and arginine 231. Residues glycine 272 and proline 273 each coordinate carbamoyl phosphate.

The protein belongs to the aspartate/ornithine carbamoyltransferase superfamily. ATCase family. In terms of assembly, heterododecamer (2C3:3R2) of six catalytic PyrB chains organized as two trimers (C3), and six regulatory PyrI chains organized as three dimers (R2).

It catalyses the reaction carbamoyl phosphate + L-aspartate = N-carbamoyl-L-aspartate + phosphate + H(+). It functions in the pathway pyrimidine metabolism; UMP biosynthesis via de novo pathway; (S)-dihydroorotate from bicarbonate: step 2/3. In terms of biological role, catalyzes the condensation of carbamoyl phosphate and aspartate to form carbamoyl aspartate and inorganic phosphate, the committed step in the de novo pyrimidine nucleotide biosynthesis pathway. The chain is Aspartate carbamoyltransferase catalytic subunit from Bradyrhizobium sp. (strain BTAi1 / ATCC BAA-1182).